A 129-amino-acid chain; its full sequence is Small ribosomal subunit protein uS8mz (129 aa).

It belongs to the universal ribosomal protein uS8 family. As to quaternary structure, component of the mitochondrial ribosome small subunit.

The protein resides in the mitochondrion. The sequence is that of Small ribosomal subunit protein uS8mz (RPS15AB) from Arabidopsis thaliana (Mouse-ear cress).